The primary structure comprises 348 residues: D-alanine--D-alanine ligase (348 aa).

One can recognise an ATP-grasp domain in the interval 136–344 (KSVFKSYNLP…LEKLVANLIE (209 aa)). 171–226 (NKIISYPCFIKPANLGSSVGITKAYSKEEFIAGIEFAAKYDERIIVEKSIEGRELE) contributes to the ATP binding site. Residues Asp-297, Glu-311, and Asn-313 each contribute to the Mg(2+) site.

This sequence belongs to the D-alanine--D-alanine ligase family. It depends on Mg(2+) as a cofactor. Mn(2+) is required as a cofactor.

The protein resides in the cytoplasm. The catalysed reaction is 2 D-alanine + ATP = D-alanyl-D-alanine + ADP + phosphate + H(+). Its pathway is cell wall biogenesis; peptidoglycan biosynthesis. Cell wall formation. The sequence is that of D-alanine--D-alanine ligase from Prochlorococcus marinus (strain NATL2A).